A 357-amino-acid chain; its full sequence is MTRDSPDSNDSYKHINKNTTQKTSFDRNSFDYIVRSGLAGGISGSCAKTLIAPLDRIKILFQTSNPHYTKYTGSLIGLVEAAKHIWINDGVRGFFQGHSATLLRIFPYAAVKFVAYEQIRNTLIPSKEFESHWRRLVSGSLAGLCSVFITYPLDLVRVRLAYETEHKRVKLGRIIKKIYKEPASATLIKNDYIPNWFCHWCNFYRGYVPTVLGMIPYAGVSFFAHDLLHDVLKSPFFAPYSVLELSEDDELERVQKKQRRPLRTWAELISGGLAGMASQTAAYPFEIIRRRLQVSALSPKTMYDHKFQSISEIAHIIFKERGVRGFFVGLSIGYIKVTPMVACSFFVYERMKWNFGI.

6 helical membrane-spanning segments follow: residues 31 to 47 (DYIVRSGLAGGISGSCA), 103 to 119 (LRIFPYAAVKFVAYEQI), 136 to 153 (LVSGSLAGLCSVFITYPL), 208 to 228 (VPTVLGMIPYAGVSFFAHDLL), 269 to 285 (ISGGLAGMASQTAAYPF), and 325 to 347 (GFFVGLSIGYIKVTPMVACSFFV). Solcar repeat units lie at residues 31–122 (DYIV…IRNT), 130–231 (ESHW…LHDV), and 262–354 (LRTW…MKWN).

This sequence belongs to the mitochondrial carrier (TC 2.A.29) family.

Its subcellular location is the mitochondrion inner membrane. Required for the accumulation of coenzyme A in the mitochondrial matrix. The sequence is that of Mitochondrial carrier protein LEU5 (LEU5) from Saccharomyces cerevisiae (strain ATCC 204508 / S288c) (Baker's yeast).